We begin with the raw amino-acid sequence, 255 residues long: Sulfur carrier protein FdhD (255 aa).

Cysteine 103 serves as the catalytic Cysteine persulfide intermediate.

The protein belongs to the FdhD family.

Its subcellular location is the cytoplasm. Required for formate dehydrogenase (FDH) activity. Acts as a sulfur carrier protein that transfers sulfur from IscS to the molybdenum cofactor prior to its insertion into FDH. This Sulfurisphaera tokodaii (strain DSM 16993 / JCM 10545 / NBRC 100140 / 7) (Sulfolobus tokodaii) protein is Sulfur carrier protein FdhD.